Reading from the N-terminus, the 337-residue chain is tRNA N6-adenosine threonylcarbamoyltransferase (337 aa).

Residues histidine 111 and histidine 115 each coordinate Fe cation. Substrate is bound by residues 134–138 (LVSGG), aspartate 167, glycine 180, and asparagine 272. Aspartate 300 contributes to the Fe cation binding site.

The protein belongs to the KAE1 / TsaD family. Fe(2+) is required as a cofactor.

Its subcellular location is the cytoplasm. The enzyme catalyses L-threonylcarbamoyladenylate + adenosine(37) in tRNA = N(6)-L-threonylcarbamoyladenosine(37) in tRNA + AMP + H(+). Its function is as follows. Required for the formation of a threonylcarbamoyl group on adenosine at position 37 (t(6)A37) in tRNAs that read codons beginning with adenine. Is involved in the transfer of the threonylcarbamoyl moiety of threonylcarbamoyl-AMP (TC-AMP) to the N6 group of A37, together with TsaE and TsaB. TsaD likely plays a direct catalytic role in this reaction. The polypeptide is tRNA N6-adenosine threonylcarbamoyltransferase (Shewanella amazonensis (strain ATCC BAA-1098 / SB2B)).